Reading from the N-terminus, the 130-residue chain is Small ribosomal subunit protein uS11c (130 aa).

The protein belongs to the universal ribosomal protein uS11 family. As to quaternary structure, part of the 30S ribosomal subunit.

The protein resides in the plastid. Its subcellular location is the chloroplast. The protein is Small ribosomal subunit protein uS11c of Porphyra purpurea (Red seaweed).